The chain runs to 303 residues: Eukaryotic translation initiation factor 3 subunit G (303 aa).

Residues 1–38 (MATQTKHDWADDEDLEETTTTTAPTTDLPPPQKIQNKD) are disordered. In terms of domain architecture, RRM spans 223–301 (ATLRVTNVSE…LILRVEFAKK (79 aa)).

It belongs to the eIF-3 subunit G family. In terms of assembly, component of the eukaryotic translation initiation factor 3 (eIF-3) complex.

The protein resides in the cytoplasm. In terms of biological role, RNA-binding component of the eukaryotic translation initiation factor 3 (eIF-3) complex, which is involved in protein synthesis of a specialized repertoire of mRNAs and, together with other initiation factors, stimulates binding of mRNA and methionyl-tRNAi to the 40S ribosome. The eIF-3 complex specifically targets and initiates translation of a subset of mRNAs involved in cell proliferation. This subunit can bind 18S rRNA. The chain is Eukaryotic translation initiation factor 3 subunit G from Chaetomium globosum (strain ATCC 6205 / CBS 148.51 / DSM 1962 / NBRC 6347 / NRRL 1970) (Soil fungus).